The sequence spans 164 residues: Thiol peroxidase (164 aa).

One can recognise a Thioredoxin domain in the interval 18–163 (INEGDFAPDF…FDAALAAYKN (146 aa)). Catalysis depends on Cys60, which acts as the Cysteine sulfenic acid (-SOH) intermediate. Cys60 and Cys93 are joined by a disulfide.

This sequence belongs to the peroxiredoxin family. Tpx subfamily. In terms of assembly, homodimer.

It carries out the reaction a hydroperoxide + [thioredoxin]-dithiol = an alcohol + [thioredoxin]-disulfide + H2O. In terms of biological role, thiol-specific peroxidase that catalyzes the reduction of hydrogen peroxide and organic hydroperoxides to water and alcohols, respectively. Plays a role in cell protection against oxidative stress by detoxifying peroxides. This Staphylococcus aureus (strain MRSA252) protein is Thiol peroxidase.